Consider the following 503-residue polypeptide: Aromatase (503 aa).

Residues Asp309 and Met374 each coordinate substrate. Cys437 serves as a coordination point for heme.

Belongs to the cytochrome P450 family. It depends on heme as a cofactor.

It localises to the membrane. It carries out the reaction testosterone + 3 reduced [NADPH--hemoprotein reductase] + 3 O2 = 17beta-estradiol + formate + 3 oxidized [NADPH--hemoprotein reductase] + 4 H2O + 4 H(+). It catalyses the reaction androst-4-ene-3,17-dione + 3 reduced [NADPH--hemoprotein reductase] + 3 O2 = estrone + formate + 3 oxidized [NADPH--hemoprotein reductase] + 4 H2O + 4 H(+). Its function is as follows. Catalyzes the formation of aromatic C18 estrogens from C19 androgens. This chain is Aromatase (CYP19A1), found in Callithrix jacchus (White-tufted-ear marmoset).